A 522-amino-acid chain; its full sequence is Major facilitator-type transporter sorT (522 aa).

Residues 1–21 (MSHTEPKAPVNTGEVENGHLY) are disordered. The next 12 membrane-spanning stretches (helical) occupy residues 52–72 (WFIA…SSAY), 89–109 (VFIV…AVWA), 121–141 (QILW…SAGS), 143–163 (NVAT…SPLV), 183–203 (TIYC…GGFV), 211–231 (WVQG…IVFI), 280–300 (WIFL…AIIY), 324–344 (IGGL…VYAI), 366–386 (LPPA…FAWT), 395–415 (VSII…LPIM), 427–447 (ASVL…FPLF), and 457–477 (IHWA…FPLI).

This sequence belongs to the major facilitator superfamily. Sugar transporter (TC 2.A.1.1) family.

It localises to the membrane. Functionally, major facilitator-type transporter; part of the gene cluster that mediates the biosynthesis of sorbicillinoids, a diverse group of yellow secondary metabolites that restrict growth of competing pathogenic fungi but not of bacteria. The sequence is that of Major facilitator-type transporter sorT from Penicillium rubens (strain ATCC 28089 / DSM 1075 / NRRL 1951 / Wisconsin 54-1255) (Penicillium chrysogenum).